Reading from the N-terminus, the 485-residue chain is Adenylate kinase 8 (485 aa).

Adenylate kinase stretches follow at residues 58 to 258 and 269 to 471; these read PRVF…TFVL and PRIL…SYIV. Residue 67-72 coordinates ATP; sequence ASGKHT. An NMP 1 region spans residues 87–113; sequence TPENVLSSDVSLLVKEAQSYRDKGQEV. AMP-binding positions include 140-143 and glutamine 147; that span reads GFPK. Residues 177-206 form an LID 1 region; sequence GKRIDITDGEVYHTTFDWPSDPAVQRNLVE. Arginine 218 serves as a coordination point for AMP. 278–283 provides a ligand contact to ATP; sequence GSGRSL. Positions 298–327 are NMP 2; sequence CCGQVLKEAVADQTKLGELIQPYIENDQQV. AMP-binding positions include 325–327, 354–357, and glutamine 361; these read QQV and GFPQ. Positions 391-424 are LID 2; it reads LCMTDPVSGERYHSIYKPAPRSEVQERLQQNPKY. Arginine 432 is an AMP binding site.

This sequence belongs to the adenylate kinase family.

Its subcellular location is the cytoplasm. It is found in the cytosol. It catalyses the reaction AMP + ATP = 2 ADP. The enzyme catalyses a 2'-deoxyribonucleoside 5'-diphosphate + ATP = a 2'-deoxyribonucleoside 5'-triphosphate + ADP. The catalysed reaction is a ribonucleoside 5'-diphosphate + ATP = a ribonucleoside 5'-triphosphate + ADP. Nucleoside monophosphate (NMP) kinase that catalyzes the reversible transfer of the terminal phosphate group between nucleoside triphosphates and monophosphates. Has highest activity toward AMP, and weaker activity toward dAMP, CMP and dCMP. Also displays broad nucleoside diphosphate kinase activity. The chain is Adenylate kinase 8 (ak8) from Xenopus laevis (African clawed frog).